The chain runs to 244 residues: MEGFSFNETLMGVNSHQKVSMNSGLQTAASKRAFSLVEVTYTPWHFAYSRCSRMFDCSLQLKSTRSDRSLSIETRFVILGDTPRIDMIFSVANSVSTGSKLIFCLLSVANVLSKGIFCQSTKLVLNLSSTVILQKENESFVRKTLNKLTLPSSTRRPLNCSKMPHRETKKVLNGAFLVSYHSFLLPRIIDNDFRVLKFALRQYKSIAGITDLVIFFGDIFRVTTDIQYQPILPLLLVSHLNFAV.

This is an uncharacterized protein from Saccharomyces cerevisiae (strain ATCC 204508 / S288c) (Baker's yeast).